The chain runs to 345 residues: Protein PXR1 (345 aa).

Disordered stretches follow at residues 1 to 25 (MGLAGTKVKQRFGLDPRNTNWSNNN) and 166 to 317 (VEDE…ASRL). The G-patch domain occupies 25–71 (NNQFGHQYLTKMGWTPGKGIGLVPDSITTHLKINIKTDNAGLGAKLQ). The segment covering 187–227 (KKEKKEKKEKKEKKEKKEKKEKKEKKEKKEKKEKKEKKEKK) has biased composition (basic residues). A compositionally biased stretch (basic and acidic residues) spans 228 to 237 (EKKEKSDKKE). Residues 238-278 (KKEKKDKKEKKEKKEKKEKKEKKEKKEKKEKKEKKEKKEKK) show a composition bias toward basic residues. Residues 279-288 (EKKDKLDKES) are compositionally biased toward basic and acidic residues. Residues 289-312 (SNAANVESTKSLVSDSSRESTPTP) are compositionally biased toward polar residues.

The protein belongs to the PINX1 family.

It is found in the nucleus. Its subcellular location is the nucleolus. Functionally, involved in rRNA-processing at A0, A1 and A2 sites and negatively regulates telomerase. The protein is Protein PXR1 (PXR1) of Lodderomyces elongisporus (strain ATCC 11503 / CBS 2605 / JCM 1781 / NBRC 1676 / NRRL YB-4239) (Yeast).